A 424-amino-acid polypeptide reads, in one-letter code: Probable ribonuclease FAU-1 (424 aa).

This sequence belongs to the FAU-1 family.

Its function is as follows. Probable RNase involved in rRNA stability through maturation and/or degradation of precursor rRNAs. Binds to RNA in loop regions with AU-rich sequences. The sequence is that of Probable ribonuclease FAU-1 from Saccharolobus islandicus (strain M.16.27) (Sulfolobus islandicus).